A 347-amino-acid polypeptide reads, in one-letter code: Phosphate acyltransferase (347 aa).

It belongs to the PlsX family. In terms of assembly, homodimer. Probably interacts with PlsY.

It is found in the cytoplasm. It catalyses the reaction a fatty acyl-[ACP] + phosphate = an acyl phosphate + holo-[ACP]. It functions in the pathway lipid metabolism; phospholipid metabolism. Its function is as follows. Catalyzes the reversible formation of acyl-phosphate (acyl-PO(4)) from acyl-[acyl-carrier-protein] (acyl-ACP). This enzyme utilizes acyl-ACP as fatty acyl donor, but not acyl-CoA. This Rhizobium meliloti (strain 1021) (Ensifer meliloti) protein is Phosphate acyltransferase.